A 249-amino-acid chain; its full sequence is Cyclin-dependent kinase inhibitor 2 (249 aa).

The disordered stretch occupies residues 118-180 (KVCTQAGEDH…MCRRSSTTSA (63 aa)). The segment covering 161 to 180 (AESNQEAKQQMCRRSSTTSA) has biased composition (polar residues).

Belongs to the CDI family. ICK/KRP subfamily.

The chain is Cyclin-dependent kinase inhibitor 2 (KRP2) from Oryza sativa subsp. japonica (Rice).